Reading from the N-terminus, the 401-residue chain is S-adenosylmethionine synthase (401 aa).

137 to 142 is an ATP binding site; that stretch reads GQGSGD.

This sequence belongs to the AdoMet synthase 2 family. Mg(2+) serves as cofactor.

The enzyme catalyses L-methionine + ATP + H2O = S-adenosyl-L-methionine + phosphate + diphosphate. It participates in amino-acid biosynthesis; S-adenosyl-L-methionine biosynthesis; S-adenosyl-L-methionine from L-methionine: step 1/1. In terms of biological role, catalyzes the formation of S-adenosylmethionine from methionine and ATP. The polypeptide is S-adenosylmethionine synthase (Haloquadratum walsbyi (strain DSM 16790 / HBSQ001)).